The chain runs to 395 residues: Flap endonuclease 1 (395 aa).

The N-domain stretch occupies residues 1-108 (MGILGLSKLL…DELEMRRQKA (108 aa)). Asp34 lines the Mg(2+) pocket. Arg74 is a DNA binding site. Asp90 lines the Mg(2+) pocket. The tract at residues 116-136 (EKAKDAGDDEMMEKMSKRTVR) is disordered. The interval 126–257 (MMEKMSKRTV…QKAWEGIQRY (132 aa)) is I-domain. Positions 162, 164, 183, and 185 each coordinate Mg(2+). A DNA-binding site is contributed by Glu162. Residues Gly235 and Asp237 each coordinate DNA. Asp237 is a Mg(2+) binding site. The segment at 340–348 (TQGRLDSFF) is interaction with PCNA.

It belongs to the XPG/RAD2 endonuclease family. FEN1 subfamily. As to quaternary structure, interacts with PCNA. Three molecules of FEN1 bind to one PCNA trimer with each molecule binding to one PCNA monomer. PCNA stimulates the nuclease activity without altering cleavage specificity. Mg(2+) serves as cofactor. Post-translationally, phosphorylated. Phosphorylation upon DNA damage induces relocalization to the nuclear plasma.

Its subcellular location is the nucleus. The protein localises to the nucleolus. It is found in the nucleoplasm. It localises to the mitochondrion. Structure-specific nuclease with 5'-flap endonuclease and 5'-3' exonuclease activities involved in DNA replication and repair. During DNA replication, cleaves the 5'-overhanging flap structure that is generated by displacement synthesis when DNA polymerase encounters the 5'-end of a downstream Okazaki fragment. It enters the flap from the 5'-end and then tracks to cleave the flap base, leaving a nick for ligation. Also involved in the long patch base excision repair (LP-BER) pathway, by cleaving within the apurinic/apyrimidinic (AP) site-terminated flap. Acts as a genome stabilization factor that prevents flaps from equilibrating into structures that lead to duplications and deletions. Also possesses 5'-3' exonuclease activity on nicked or gapped double-stranded DNA, and exhibits RNase H activity. Also involved in replication and repair of rDNA and in repairing mitochondrial DNA. The sequence is that of Flap endonuclease 1 from Leishmania major.